The sequence spans 308 residues: Olfactory receptor 13H1 (308 aa).

Residues 1 to 25 (MAMDNVTAVFQFLLIGISNYPQWRD) lie on the Extracellular side of the membrane. N5 is a glycosylation site (N-linked (GlcNAc...) asparagine). The chain crosses the membrane as a helical span at residues 26–46 (TFFTLVLIIYLSTLLGNGFMI). Residues 47 to 54 (FLIHFDPN) are Cytoplasmic-facing. Residues 55–75 (LHTPIYFFLSNLSFLDLCYGT) traverse the membrane as a helical segment. At 76-99 (ASMPQALVHCFSTHPYLSYPRCLA) the chain is on the extracellular side. A disulfide bridge links C97 with C188. A helical membrane pass occupies residues 100–120 (QTSVSLALATAECLLLAAMAY). Residues 121–139 (DRVVAISNPLRYSVVMNGP) are Cytoplasmic-facing. The chain crosses the membrane as a helical span at residues 140 to 159 (VCVCLVATSWGTSLVLTAML). Residues 160 to 196 (ILSLRLHFCGANVINHFACEILSLIKLTCSDTSLNEF) lie on the Extracellular side of the membrane. Residues 197-216 (MILITSIFTLLLPFGFVLLS) form a helical membrane-spanning segment. The Cytoplasmic segment spans residues 217–236 (YIRIAMAIIRIRSLQGRLKA). Residues 237-257 (FTTCGSHLTVVTIFYGSAISM) traverse the membrane as a helical segment. At 258-270 (YMKTQSKSYPDQD) the chain is on the extracellular side. A helical transmembrane segment spans residues 271 to 291 (KFISVFYGALTPMLNPLIYSL). The Cytoplasmic segment spans residues 292–308 (RKKDVKRAIRKVMLKRT).

The protein belongs to the G-protein coupled receptor 1 family.

Its subcellular location is the cell membrane. Functionally, odorant receptor. In Homo sapiens (Human), this protein is Olfactory receptor 13H1 (OR13H1).